The primary structure comprises 199 residues: Thymidine kinase (199 aa).

ATP is bound by residues 23-30 and 95-98; these read GSMFSGKT and DEAQ. The Proton acceptor role is filled by Glu96. Zn(2+) contacts are provided by Cys152, Cys155, Cys184, and Cys187.

Belongs to the thymidine kinase family. In terms of assembly, homotetramer.

It localises to the cytoplasm. The enzyme catalyses thymidine + ATP = dTMP + ADP + H(+). In Bacteroides fragilis (strain YCH46), this protein is Thymidine kinase.